The chain runs to 136 residues: ATP synthase epsilon chain (136 aa).

Belongs to the ATPase epsilon chain family. In terms of assembly, F-type ATPases have 2 components, CF(1) - the catalytic core - and CF(0) - the membrane proton channel. CF(1) has five subunits: alpha(3), beta(3), gamma(1), delta(1), epsilon(1). CF(0) has three main subunits: a, b and c.

Its subcellular location is the cell inner membrane. In terms of biological role, produces ATP from ADP in the presence of a proton gradient across the membrane. This chain is ATP synthase epsilon chain, found in Hydrogenobaculum sp. (strain Y04AAS1).